The primary structure comprises 103 residues: Acyl carrier protein (103 aa).

One can recognise a Carrier domain in the interval 14 to 89 (NIVSNIVQDI…EFIDFTLQTI (76 aa)). An O-(pantetheine 4'-phosphoryl)serine modification is found at serine 49.

This sequence belongs to the acyl carrier protein (ACP) family. 4'-phosphopantetheine is transferred from CoA to a specific serine of apo-ACP by AcpS. This modification is essential for activity because fatty acids are bound in thioester linkage to the sulfhydryl of the prosthetic group.

It is found in the plastid. Its subcellular location is the cyanelle. The protein operates within lipid metabolism; fatty acid biosynthesis. Carrier of the growing fatty acid chain in fatty acid biosynthesis. The sequence is that of Acyl carrier protein from Cyanophora paradoxa.